Here is a 69-residue protein sequence, read N- to C-terminus: U2-agatoxin-Ao1e (69 aa).

The signal sequence occupies residues 1 to 20; the sequence is MRAIISVLLISAMVFSIIEA. Residues 21–34 constitute a propeptide that is removed on maturation; sequence VPLEEGLQLFEAER. Cystine bridges form between Cys-37/Cys-53, Cys-44/Cys-58, and Cys-52/Cys-68.

Belongs to the neurotoxin 01 (U2-agtx) family. As to expression, expressed by the venom gland.

Its subcellular location is the secreted. In terms of biological role, insect active toxin causing rapid but reversible paralysis in crickets. No activity shown in mammals. Does not show effect on mammalian voltage-gated calcium channels. This is U2-agatoxin-Ao1e from Agelena orientalis (Funnel-web spider).